The chain runs to 621 residues: GPI-anchor transamidase component GPAA1 (621 aa).

Topologically, residues 1 to 19 are cytoplasmic; sequence MGLLSDPVRRRALARIVLR. A helical transmembrane segment spans residues 20–41; it reads LNTPLCVLSYVAGIAWFLALAF. Over 42 to 370 the chain is Lumenal; it reads PPLTQRTYMS…LLPALSRFVS (329 aa). Residues Y49 and S51 each coordinate a 2-acyl-6-[6-phosphoethanolamine-alpha-D-mannosyl-(1-&gt;2)-6-phosphoethanolamine-alpha-D-mannosyl-(1-&gt;6)-2-phosphoethanolamine-alpha-D-mannosyl-(1-&gt;4)-alpha-D-glucosaminyl]-1-(1-radyl,2-acyl-sn-glycero-3-phospho)-1D-myo-inositol. N203 carries N-linked (GlcNAc...) asparagine glycosylation. C259 and C266 form a disulfide bridge. H354, Q355, and S356 together coordinate a 2-acyl-6-[6-phosphoethanolamine-alpha-D-mannosyl-(1-&gt;2)-6-phosphoethanolamine-alpha-D-mannosyl-(1-&gt;6)-2-phosphoethanolamine-alpha-D-mannosyl-(1-&gt;4)-alpha-D-glucosaminyl]-1-(1-radyl,2-acyl-sn-glycero-3-phospho)-1D-myo-inositol. Q355 serves as a coordination point for Mg(2+). Residues 371–393 form a helical membrane-spanning segment; sequence IGLYMPATGFLLLVLGLKALELW. Over 394 to 425 the chain is Cytoplasmic; it reads MQLHQAGVNPEEAGKAPSPGTPLLPTQGVGLA. The chain crosses the membrane as a helical span at residues 426–450; it reads SLTAPLLISQAMGLALYFLPVLGQH. Over 451 to 462 the chain is Lumenal; the sequence is LATQHFPVAEAE. Residues 463–483 form a helical membrane-spanning segment; the sequence is AVVLTLLAIYVAGLALPHNTH. Over 484-495 the chain is Cytoplasmic; that stretch reads RVVNSQVPDRGW. Transmembrane regions (helical) follow at residues 496 to 519 and 520 to 536; these read MALKLVALIYLALQLGCIALLNFS and LGFLLAATMVPAAALAK. Residues 537 to 540 are Cytoplasmic-facing; sequence PHGP. Residues 541–563 traverse the membrane as a helical segment; that stretch reads RTLYAALLVVTSPAVTLFGSLFL. At 564 to 597 the chain is on the lumenal side; the sequence is WRELLEVPLSLAEGWQLFLTALAQGVLEHYTYGA. A helical transmembrane segment spans residues 598–619; sequence LLFPILALGLYPCWLLFWNVLF. The Cytoplasmic portion of the chain corresponds to 620–621; the sequence is WK.

In terms of assembly, heteropentamer. Part of the GPI-anchor transamidase complex, consisting of PIGK, PIGT, PIGS, PIGU and GAA1. Interacts with PIGK. In terms of tissue distribution, ubiquitously expressed in fetal and adult tissues. Expressed at higher levels in fetal tissues than adult tissues. In embryos abundant in the choroid plexus, skeletal muscle,.

The protein localises to the endoplasmic reticulum membrane. It participates in glycolipid biosynthesis; glycosylphosphatidylinositol-anchor biosynthesis. Component of the glycosylphosphatidylinositol-anchor (GPI-anchor) transamidase (GPI-T) complex that catalyzes the formation of the linkage between a proprotein and a GPI-anchor and participates in GPI anchored protein biosynthesis. Binds GPI-anchor. The chain is GPI-anchor transamidase component GPAA1 from Mus musculus (Mouse).